Reading from the N-terminus, the 1021-residue chain is Inversin (1021 aa).

16 ANK repeats span residues 7–36 (QNPSQVHAAAVNGDKNTLHKLITESALRDS), 40–69 (FGRTPLMYCVLADRLDCAEVLLKAGAGINK), 73–102 (SQRTALHLAAQKGNVRFMKLLLSRHADWRL), 106–137 (EEMTPLHLASRHSSSKPLSLLLKHMAPGEVDT), 141–170 (NKQTALHWSAFYNHPEHVKLLIKHDSNIGI), 174–206 (EGKIPLHWAAHNKHPNATRTVRCILEAAPTESL), 213–243 (EGRTPLHFAVADGNEAVVEVLTSYEGCSVTA), 247–276 (LFRTPLHWAALLGHAKIVHLLLERNKSGMI), 281–310 (QGATPLHYGAQSNFADTVAVFLKHHSVRDE), 314–343 (EGRTAFMWAAGKGSNDVIKIMLDLKKDIDI), 349–378 (YGGTALHAAALSGHVSTVRLLLEQGGMVDP), 382–411 (MKHTPLFRACEMGHRDVILTLIKGGARVDL), 415–444 (DGHSALHWAALGGNAEVCEVLMENGISPNL), 448–477 (AGRTPLQCAAYAGYINCMALLIQHDADPNI), 481–510 (EGRTALHWSCNNGYLDAVKLLLGCGAFPNH), and 516–546 (ERYTPLDYALLGEHQELTQFLLEHGALSIAA). The D-box 1 signature appears at 483–491 (RTALHWSCN). One can recognise an IQ 1 domain in the interval 548–577 (QDIAASSIQALYKGYKVRRAFRERKKLLMR). Composition is skewed to basic and acidic residues over residues 579 to 598 (EQLRKDAAKKREEERRREAE) and 653 to 669 (SRREKPSRAERRTREPE). Disordered regions lie at residues 579-602 (EQLRKDAAKKREEERRREAEQQLS), 632-691 (KDSV…KKCP), and 704-868 (GPDT…GTCS). The span at 722–731 (PAGSSRPGSA) shows a compositional bias: low complexity. Composition is skewed to polar residues over residues 759 to 781 (GAHSKNASQDTPQHNETQTTSKG) and 791 to 802 (TGSQPSNNTSVT). The span at 803–866 (RQKEKRQEKE…KEKEKKKDGT (64 aa)) shows a compositional bias: basic and acidic residues. Positions 862–870 (KKDGTCSKN) match the D-box 2 motif. The 30-residue stretch at 869–898 (KNQAAVVIQRAWRRSCVRGRIRKVLCRSLK) folds into the IQ 2 domain.

As to quaternary structure, binds calmodulin via its IQ domains.

It localises to the cytoplasm. Its subcellular location is the cytoskeleton. Its function is as follows. Required for normal renal development and establishment of left-right axis. Probably acts as a molecular switch between different Wnt signaling pathways. Inhibits the canonical Wnt pathway by targeting cytoplasmic disheveled for degradation by the ubiquitin-proteasome. This suggests that it is required in renal development to oppose the repression of terminal differentiation of tubular epithelial cells by Wnt signaling. The protein is Inversin (invs) of Danio rerio (Zebrafish).